The chain runs to 332 residues: Glyceraldehyde-3-phosphate dehydrogenase 2 (332 aa).

Residues 11–12, Asp32, and Arg77 contribute to the NAD(+) site; that span reads RI. Residues 148–150, Thr179, 208–209, and Arg231 contribute to the D-glyceraldehyde 3-phosphate site; these read SCT and TG. The active-site Nucleophile is Cys149. Residue Asn313 participates in NAD(+) binding.

It belongs to the glyceraldehyde-3-phosphate dehydrogenase family. Homotetramer.

It is found in the cytoplasm. It carries out the reaction D-glyceraldehyde 3-phosphate + phosphate + NAD(+) = (2R)-3-phospho-glyceroyl phosphate + NADH + H(+). It participates in carbohydrate degradation; glycolysis; pyruvate from D-glyceraldehyde 3-phosphate: step 1/5. The protein is Glyceraldehyde-3-phosphate dehydrogenase 2 (Gapdh2) of Drosophila pseudoobscura pseudoobscura (Fruit fly).